Here is a 433-residue protein sequence, read N- to C-terminus: Shikimate O-hydroxycinnamoyltransferase (433 aa).

The active-site Proton acceptor is the H153. Residues 252-255, 284-290, and 370-373 contribute to the 4-coumaroyl-CoA site; these read SSYE, DGRSRLR, and SWVR. The Proton acceptor role is filled by D380.

This sequence belongs to the plant acyltransferase family.

It carries out the reaction shikimate + 4-coumaroyl-CoA = trans-4-coumaroylshikimate + CoA. Its function is as follows. Acyltransferase involved in the biosynthesis of lignin. Accepts caffeoyl-CoA and p-coumaroyl-CoA as substrates and transfers the acyl group on both shikimate and quinate acceptors. The polypeptide is Shikimate O-hydroxycinnamoyltransferase (HST) (Arabidopsis thaliana (Mouse-ear cress)).